The chain runs to 464 residues: ATP synthase subunit beta (464 aa).

Position 152–159 (152–159 (GGAGVGKS)) interacts with ATP.

It belongs to the ATPase alpha/beta chains family. F-type ATPases have 2 components, CF(1) - the catalytic core - and CF(0) - the membrane proton channel. CF(1) has five subunits: alpha(3), beta(3), gamma(1), delta(1), epsilon(1). CF(0) has three main subunits: a(1), b(2) and c(9-12). The alpha and beta chains form an alternating ring which encloses part of the gamma chain. CF(1) is attached to CF(0) by a central stalk formed by the gamma and epsilon chains, while a peripheral stalk is formed by the delta and b chains.

The protein localises to the cell membrane. It carries out the reaction ATP + H2O + 4 H(+)(in) = ADP + phosphate + 5 H(+)(out). Produces ATP from ADP in the presence of a proton gradient across the membrane. The catalytic sites are hosted primarily by the beta subunits. The chain is ATP synthase subunit beta from Protochlamydia amoebophila (strain UWE25).